A 363-amino-acid chain; its full sequence is Phosphoribosylformylglycinamidine cyclo-ligase (363 aa).

Belongs to the AIR synthase family.

The protein localises to the cytoplasm. It catalyses the reaction 2-formamido-N(1)-(5-O-phospho-beta-D-ribosyl)acetamidine + ATP = 5-amino-1-(5-phospho-beta-D-ribosyl)imidazole + ADP + phosphate + H(+). Its pathway is purine metabolism; IMP biosynthesis via de novo pathway; 5-amino-1-(5-phospho-D-ribosyl)imidazole from N(2)-formyl-N(1)-(5-phospho-D-ribosyl)glycinamide: step 2/2. The chain is Phosphoribosylformylglycinamidine cyclo-ligase from Brucella anthropi (strain ATCC 49188 / DSM 6882 / CCUG 24695 / JCM 21032 / LMG 3331 / NBRC 15819 / NCTC 12168 / Alc 37) (Ochrobactrum anthropi).